Consider the following 690-residue polypeptide: Eukaryotic translation initiation factor 3 subunit B (690 aa).

The segment covering 1 to 11 (MAKKKSEEHSS) has biased composition (basic and acidic residues). The interval 1 to 33 (MAKKKSEEHSSADANDSDYQEEPNFDDPPNFVD) is disordered. Positions 15-25 (NDSDYQEEPNF) are enriched in acidic residues. The region spanning 57–141 (SVVVVDNIPK…HTFAVNLFTD (85 aa)) is the RRM domain. 5 WD repeats span residues 207–246 (TRERFTDTFVKWSPLGTYVVTFHKPGVAIWGGSNFQKIQK), 293–331 (DGMSVLSMFRWSHDDKFVARMGENSIHIYETPSFYLLDL), 334–369 (IKIPGIRGFSWSPTDNVIAYWVEEQNQIPARVTLME), 442–484 (EIRE…KPSL), and 530–575 (PDHF…IKRT). A coiled-coil region spans residues 614-645 (QKDRLRLTRASKELLEKRSQLRETFMEYRNKR).

It belongs to the eIF-3 subunit B family. In terms of assembly, component of the eukaryotic translation initiation factor 3 (eIF-3) complex. The eIF-3 complex interacts with pix. Interacts with mxt.

Its subcellular location is the cytoplasm. Its function is as follows. RNA-binding component of the eukaryotic translation initiation factor 3 (eIF-3) complex, which is involved in protein synthesis of a specialized repertoire of mRNAs and, together with other initiation factors, stimulates binding of mRNA and methionyl-tRNAi to the 40S ribosome. The eIF-3 complex specifically targets and initiates translation of a subset of mRNAs involved in cell proliferation. The sequence is that of Eukaryotic translation initiation factor 3 subunit B from Drosophila willistoni (Fruit fly).